We begin with the raw amino-acid sequence, 273 residues long: Cytoplasmic phosphatidylinositol transfer protein 1 (273 aa).

Residues 244-273 are disordered; that stretch reads QAETNEKIHNTSGGANAAANAKEANDGDID.

It belongs to the PtdIns transfer protein family. PI transfer class IIB subfamily.

Functionally, phosphatidylinositol transfer proteins mediate the monomeric transport of lipids by shielding a lipid from the aqueous environment and binding the lipid in a hydrophobic cavity. The chain is Cytoplasmic phosphatidylinositol transfer protein 1 (rdgBbeta) from Drosophila melanogaster (Fruit fly).